We begin with the raw amino-acid sequence, 304 residues long: Thyroxine 5-deiodinase (304 aa).

Residues 1 to 23 form a disordered region; sequence MPRQATSRLVVGEGEGSQGASGP. Residues 1–44 are Cytoplasmic-facing; the sequence is MPRQATSRLVVGEGEGSQGASGPAATMLRSLLLHSLRLCAQTAS. Residues 45–67 traverse the membrane as a helical; Signal-anchor for type II membrane protein segment; it reads CLVLFPRFLGTAFMLWLLDFLCI. Residues 68 to 304 are Extracellular-facing; the sequence is RKHFLGRRRR…QLHGARPRRV (237 aa). The interval 78–99 is disordered; sequence GQPEPEVELNSEGEEVPPDDPP. The span at 82–95 shows a compositional bias: acidic residues; it reads PEVELNSEGEEVPP. Selenocysteine 170 is an active-site residue. A non-standard amino acid (selenocysteine) is located at residue selenocysteine 170.

It belongs to the iodothyronine deiodinase family. As to quaternary structure, monomer. Homodimer. May undergo minor heretodimerization with DIO1 and DIO2. In terms of tissue distribution, expressed in placenta and several fetal tissues.

It is found in the cell membrane. The protein localises to the endosome membrane. The catalysed reaction is 3,3',5'-triiodo-L-thyronine + iodide + A + H(+) = L-thyroxine + AH2. It catalyses the reaction 3,3'-diiodo-L-thyronine + iodide + A + H(+) = 3,3',5-triiodo-L-thyronine + AH2. It carries out the reaction 3-iodo-L-thyronine + iodide + A + H(+) = 3,5-diiodo-L-thyronine + AH2. The enzyme catalyses L-thyronine + iodide + A + H(+) = 3-iodo-L-thyronine + AH2. The catalysed reaction is 3',5'-diiodo-L-thyronine + iodide + A + H(+) = 3,3',5'-triiodo-L-thyronine + AH2. It catalyses the reaction 3'-iodo-L-thyronine + iodide + A + H(+) = 3,3'-diiodo-L-thyronine + AH2. It carries out the reaction 3,3',5'-triiodothyronamine + iodide + A + H(+) = 3,3',5,5'-tetraiodothyronamine + AH2. The enzyme catalyses 3',5'-diiodothyronamine + iodide + A + H(+) = 3,3',5'-triiodothyronamine + AH2. The catalysed reaction is 3,3'-diiodothyronamine + iodide + A + H(+) = 3,3',5-triiodothyronamine + AH2. It catalyses the reaction 3-iodothyronamine + iodide + A + H(+) = 3,5-diiodothyronamine + AH2. It carries out the reaction 3'-iodothyronamine + iodide + A + H(+) = 3,3'-diiodothyronamine + AH2. The enzyme catalyses thyronamine + iodide + A + H(+) = 3-iodothyronamine + AH2. Its function is as follows. Plays a crucial role in the metabolism of thyroid hormones (TH) and has specific roles in TH activation and inactivation by deiodination. Catalyzes the deiodination of L-thyroxine (T4) to 3,3',5'-triiodothyronine (rT3), 3,5,3'-triiodothyronine (T3) to 3,3'-diiodothyronine (3,3'-T2), 3,5-diiodothyronine (3,5-T2) to 3-monoiodothyronine (3-T1), rT3 to 3',5'-diiodothyronine (3',5'-T2) and 3,3'-T2 to 3'-monoiodothyronine (3'-T1) via inner-ring deiodination (IRD). Catalyzes the deiodination of 3-T1 to L-thyronine (T0) via outer-ring deiodination (ORD). Catalyzes the tyrosyl ring deiodinations of 3,3',5,5'-tetraiodothyronamine, 3,3',5'-triiodothyronamine, 3,5,3'-triiodothyronamine, 3,5-diiodothyronamine, 3,3'-diiodothyronamine and 3-iodothyronamine. The chain is Thyroxine 5-deiodinase (DIO3) from Homo sapiens (Human).